The following is a 1328-amino-acid chain: Protein turtle homolog B (1328 aa).

Residues 1-17 (MIWYVATLIASVISTRG) form the signal peptide. The Extracellular segment spans residues 18–722 (LVAQGAHGLR…DLTDDGLARP (705 aa)). 5 Ig-like domains span residues 30–115 (PEFV…ECKV), 139–226 (PTFT…LLVQ), 228–320 (PPFI…AYLT), 324–415 (PARV…ARLV), and 420–504 (PYFT…THLT). 2 cysteine pairs are disulfide-bonded: Cys45/Cys113 and Cys161/Cys208. 2 N-linked (GlcNAc...) asparagine glycosylation sites follow: Asn241 and Asn258. 3 disulfides stabilise this stretch: Cys250–Cys303, Cys346–Cys397, and Cys442–Cys488. 2 consecutive Fibronectin type-III domains span residues 512 to 604 (APGS…TLAF) and 614 to 708 (LVTP…STDI). Asn624 carries an N-linked (GlcNAc...) asparagine glycan. The chain crosses the membrane as a helical span at residues 723–743 (VLAGIVATICFLAAAILFSTL). Topologically, residues 744–1328 (AACFVNKQRK…EPPTTLPTSG (585 aa)) are cytoplasmic. Disordered stretches follow at residues 758–817 (RKKD…EKEL), 914–1040 (PMSS…PEPW), and 1106–1328 (KSPG…PTSG). Residues Ser775, Ser783, and Ser794 each carry the phosphoserine modification. A compositionally biased stretch (low complexity) spans 990-1001 (SPLSSVMSSPPL). Composition is skewed to polar residues over residues 1018–1033 (ENAS…TPTG), 1129–1141 (LVSQ…TSQG), and 1199–1214 (SRLS…SRTG). Omega-N-methylarginine is present on Arg1136. Phosphoserine occurs at positions 1207 and 1215. Residues 1246–1273 (SFSRKSTPSSTGSPSQSSRSGSPSYRPT) show a composition bias toward low complexity. 2 stretches are compositionally biased toward pro residues: residues 1284–1295 (PSPPPGPAPPAP) and 1318–1328 (PEPPTTLPTSG).

This sequence belongs to the immunoglobulin superfamily. Turtle family. As to quaternary structure, found in a complex with MAGI2 and NLGN2, where it interacts with MAGI2 (via PDZ 5 and PDZ 6 domains). In terms of processing, N-glycosylated and sialylated. Not significantly O-glycosylated. As to expression, detected in brain.

The protein localises to the cell membrane. It is found in the postsynaptic cell membrane. It localises to the postsynaptic density. Functionally, transmembrane protein which is abundantly expressed in interneurons, where it may regulate inhibitory synapse development. May mediate homophilic cell adhesion. The polypeptide is Protein turtle homolog B (Mus musculus (Mouse)).